A 156-amino-acid polypeptide reads, in one-letter code: Arginine repressor (156 aa).

This sequence belongs to the ArgR family.

Its subcellular location is the cytoplasm. It participates in amino-acid biosynthesis; L-arginine biosynthesis [regulation]. Its function is as follows. Regulates arginine biosynthesis genes. The sequence is that of Arginine repressor from Shewanella sp. (strain ANA-3).